Consider the following 166-residue polypeptide: Cyclic pyranopterin monophosphate synthase (166 aa).

Residues 83-85 (LCH) and 121-122 (ME) contribute to the substrate site. Residue Asp136 is part of the active site.

It belongs to the MoaC family. Homohexamer; trimer of dimers.

The enzyme catalyses (8S)-3',8-cyclo-7,8-dihydroguanosine 5'-triphosphate = cyclic pyranopterin phosphate + diphosphate. It participates in cofactor biosynthesis; molybdopterin biosynthesis. Catalyzes the conversion of (8S)-3',8-cyclo-7,8-dihydroguanosine 5'-triphosphate to cyclic pyranopterin monophosphate (cPMP). The chain is Cyclic pyranopterin monophosphate synthase from Trichodesmium erythraeum (strain IMS101).